Reading from the N-terminus, the 616-residue chain is MMEHTAHDRELPIRPGWDSVVNIAESRSCFSRFQSCFARPQKLVVVIGLCLLLCSPPPGAQGLPTAADWKTLSNELSGRLHQGVPLARPCFSTYNGQPAAADEEECAAIRHRYLDAEFRANQYAGFYFAQGDGCISNTTNQCQLDPENLGASPGSGLPCNQGLVSPWYVDVRSASDVQSAFRFARRTGTPISIKASGHDYVNRHTLPGSLGLWTRNLRNMTYHATFRPAGVSGAEPVQAITFGSGVNSNEAQAFAGRNNVTLVGPSSATIAIVGGWTLFGGHSVLSPTLGLGVDRVLQIELVTPDGALRICNRQLHADLFWALRGAGAGTYGVVLSMTVRVEPATPVTLALLSFTPTLENQAPFLDLLINNTPAWSAGGWGGPMTSSSLALVSLEQDEAAAAQSMRAAADYVRGENGTVTIEQFPTYSEFYARYIAVSESYVGIGALPTLRVLPKRLHDQPQGRAELLAFLSQRARNNQTPYLFMTPPARYSTPRDSTSMHPAWRNSYWLAGFQSSYAWNASVAERREAAREDQTSARDLTALAPEGAAYPNEASPWHRDWRREFWGDDNYARLEAVKARYDPAGLLRCWHCVGFDDAWVHADPAFECMGAFDGLV.

The region spanning 160–344 (NQGLVSPWYV…LSMTVRVEPA (185 aa)) is the FAD-binding PCMH-type domain.

This sequence belongs to the oxygen-dependent FAD-linked oxidoreductase family. FAD is required as a cofactor.

Its pathway is secondary metabolite biosynthesis. Its function is as follows. FAD-linked oxidoreductase; part of the gene cluster that mediates the biosynthesis of chaetoglobosin A which has a unique inhibitory activity against actin polymerization in mammalian cells. Chaetoglobosin A and its intermediates are involved in the morphological differentiation of C.globosum. The first step of the pathway is the synthesis of prochaetoglobosin I via condensation of one acetyl-CoA, 8 malonyl-CoA, and a L-tryptophan molecule by the PKS-NRPS hybrid synthetase cheA, followed by reduction of backbone double bond to install desired geometry by the enoyl reductase cheB. Further multiple oxidation steps performed by the cytochrome P450 monooxygenases cheE and cheG, as well as by the FAD-linked oxidoreductase cheF, lead to the formation of chaetoglobosin A. Depending on the order of action of these reductases, distinct intermediates can be identified. Within the pathway, the cytochrome P450 monooxygenase cheE catalyzes a stereospecific epoxidation on prochaetoglobosin I, cytoglobosin D, and chaetoglobosin J intermediates. The FAD-linked oxidoreductase cheF performs dehydrogenation of the C-20 hydroxyl groups in the 20-dihyrochaetoglobosin A and cytoglobosin D intermediates. Finally, the cytochrome P450 monooxygenase cheG can catalyze the stereospecific dihydroxylation of prochaetoglobosin I and prochaetoglobosin IV at C-19 and C-20, respectively. The Diels-Alderase cheD may play a role in the post-PKS-NRPS biosynthetic steps catalyzing Diels-Alder cyclization. The sequence is that of FAD-linked oxidoreductase cheF from Chaetomium globosum (strain ATCC 6205 / CBS 148.51 / DSM 1962 / NBRC 6347 / NRRL 1970) (Soil fungus).